We begin with the raw amino-acid sequence, 181 residues long: ATP-dependent protease subunit HslV (181 aa).

The active site involves threonine 7. Residues alanine 162, cysteine 165, and threonine 168 each coordinate Na(+).

The protein belongs to the peptidase T1B family. HslV subfamily. In terms of assembly, a double ring-shaped homohexamer of HslV is capped on each side by a ring-shaped HslU homohexamer. The assembly of the HslU/HslV complex is dependent on binding of ATP.

The protein resides in the cytoplasm. It carries out the reaction ATP-dependent cleavage of peptide bonds with broad specificity.. Allosterically activated by HslU binding. Protease subunit of a proteasome-like degradation complex believed to be a general protein degrading machinery. The chain is ATP-dependent protease subunit HslV from Coxiella burnetii (strain RSA 331 / Henzerling II).